The following is a 554-amino-acid chain: Glutamine--tRNA ligase (554 aa).

Positions 34 to 44 match the 'HIGH' region motif; that stretch reads PEPNGYLHIGH. Residues 35–37 and 41–47 contribute to the ATP site; these read EPN and HIGHAKS. L-glutamine-binding residues include aspartate 67 and tyrosine 212. ATP contacts are provided by residues threonine 231, 261 to 262, and 269 to 271; these read RL and MSK. The 'KMSKS' region motif lies at 268-272; sequence VMSKR. The interaction with tRNA stretch occupies residues 317 to 324; the sequence is TKQDNTIE.

The protein belongs to the class-I aminoacyl-tRNA synthetase family. As to quaternary structure, monomer.

Its subcellular location is the cytoplasm. The enzyme catalyses tRNA(Gln) + L-glutamine + ATP = L-glutaminyl-tRNA(Gln) + AMP + diphosphate. The chain is Glutamine--tRNA ligase from Escherichia coli (strain 55989 / EAEC).